The following is a 347-amino-acid chain: Secretory carrier-associated membrane protein 3 (347 aa).

The disordered stretch occupies residues 1–88 (MAQSRDGGNP…EPKNYGSYST (88 aa)). Over 1–170 (MAQSRDGGNP…QKTVSTMYYL (170 aa)) the chain is Cytoplasmic. Ser32 is modified (phosphoserine). Position 37 is a phosphothreonine (Thr37). Tyr41 and Tyr53 each carry phosphotyrosine. Over residues 49–66 (PPPAYEPPAPAPLPPPSA) the composition is skewed to pro residues. Phosphoserine occurs at positions 72 and 76. Tyr83 is modified (phosphotyrosine). Residue Ser85 is modified to Phosphoserine. 4 helical membrane-spanning segments follow: residues 171-191 (WMCSTLALLLNFLACLASFCV), 197-217 (AGFGLSILWVLLFTPCSFVCW), 247-267 (FVLQAIGIPGWGFSGWISALV), and 277-297 (VLMLLVALLFTGIAVLGIVML). At 298-347 (KRIHSLYRRTGASFQKAQQEFAAGVFSNPAVRTAAANAAAGAAENAFRAP) the chain is on the cytoplasmic side. Lys313 is covalently cross-linked (Glycyl lysine isopeptide (Lys-Gly) (interchain with G-Cter in SUMO1)).

Belongs to the SCAMP family. Interacts with NEDD4, NEDD4L and TSG101. Interacts with RNF126. In terms of processing, monoubiquitinated. In terms of tissue distribution, widely expressed, with highest expression in heart and skeletal muscle.

Its subcellular location is the membrane. Functionally, functions in post-Golgi recycling pathways. Acts as a recycling carrier to the cell surface. The chain is Secretory carrier-associated membrane protein 3 (SCAMP3) from Homo sapiens (Human).